Reading from the N-terminus, the 151-residue chain is MSSTILVIHGPNLNLLGKREPEVYGHLTLDNINQQLIAQAEQASITLDTFQSNWEGAIVDRIHQAQTEGVKLIIINPAALTHTSVALRDALLGVAIPFIEVHLSNVHAREAFRHHSYLSDKAIGVICGLGAKGYSFALDYAIEKIQPSNPN.

Y24 serves as the catalytic Proton acceptor. Substrate contacts are provided by N76, H82, and D89. H102 acts as the Proton donor in catalysis. Substrate is bound by residues 103–104 (LS) and R113.

This sequence belongs to the type-II 3-dehydroquinase family. As to quaternary structure, homododecamer.

It catalyses the reaction 3-dehydroquinate = 3-dehydroshikimate + H2O. It functions in the pathway metabolic intermediate biosynthesis; chorismate biosynthesis; chorismate from D-erythrose 4-phosphate and phosphoenolpyruvate: step 3/7. Functionally, catalyzes a trans-dehydration via an enolate intermediate. This Acinetobacter baumannii (strain AB307-0294) protein is 3-dehydroquinate dehydratase.